Consider the following 207-residue polypeptide: Peptidyl-tRNA hydrolase (207 aa).

Tyrosine 14 contributes to the tRNA binding site. The active-site Proton acceptor is histidine 19. Positions 68, 70, and 116 each coordinate tRNA.

It belongs to the PTH family. Monomer.

The protein resides in the cytoplasm. The catalysed reaction is an N-acyl-L-alpha-aminoacyl-tRNA + H2O = an N-acyl-L-amino acid + a tRNA + H(+). Hydrolyzes ribosome-free peptidyl-tRNAs (with 1 or more amino acids incorporated), which drop off the ribosome during protein synthesis, or as a result of ribosome stalling. Its function is as follows. Catalyzes the release of premature peptidyl moieties from peptidyl-tRNA molecules trapped in stalled 50S ribosomal subunits, and thus maintains levels of free tRNAs and 50S ribosomes. The protein is Peptidyl-tRNA hydrolase of Hyphomonas neptunium (strain ATCC 15444).